The following is a 579-amino-acid chain: Folliculin (579 aa).

The disordered stretch occupies residues 31–82 (QGAGSGDSPDQVEQAEEEEGGIQMSSRVRAHSPAEGASSESSSPGPKKSDMC). 2 positions are modified to phosphoserine: Ser62 and Ser73. Residues 63–76 (PAEGASSESSSPGP) are compositionally biased toward low complexity. The uDENN FLCN/SMCR8-type domain maps to 86–242 (RSLAVGHPGY…RNGNAARSLT (157 aa)). Positions 287–310 (EKLADLEEESESWDNSEAEEEEKA) form a coiled coil. Positions 294-308 (EESESWDNSEAEEEE) are enriched in acidic residues. The tract at residues 294–323 (EESESWDNSEAEEEEKAPVTPEGAEGRELT) is disordered. 5 positions are modified to phosphoserine: Ser302, Ser406, Ser537, Ser542, and Ser571. Residues 339–491 (QPPKLTGFKS…ILNKIEAALT (153 aa)) enclose the cDENN FLCN/SMCR8-type domain. The dDENN FLCN/SMCR8-type domain occupies 493–558 (QNLSVDVVDQ…LLKFWMTGLS (66 aa)).

This sequence belongs to the folliculin family. Interacts (via C-terminus) with FNIP1 or FNIP2 (via C-terminus). Component of the lysosomal folliculin complex (LFC), composed of FLCN, FNIP1 (or FNIP2), RagA/RRAGA or RagB/RRAGB GDP-bound, RagC/RRAGC or RagD/RRAGD GTP-bound, and Ragulator. Interaction with FNIP1 or FNIP2 mediates indirect interaction with the PRKAA1, PRKAB1 and PRKAG1 subunits of 5'-AMP-activated protein kinase (AMPK). Interacts with HSP90AA1 in the presence of FNIP1. Interacts with HSP70, STUB1, CDC37, AHSA1, CCT2, STIP1, PTGES3 and PPP5C. Interacts with GABARAP; interaction takes place in the presence of FNIP1 and/or FNIP2. Interacts with RILP; the interaction is direct and promotes association between RILP and RAB34. Interacts with KIF3A and KIF3B. Interacts with lactate dehydrogenase LDHA, but not LDHB; the interaction is direct, may preferentially bind LDHA dimers rather than tetramers, and regulates LDHA activity, acting as an uncompetitive inhibitor. Phosphorylation by ULK1 modulates the interaction with GABARAP and is required to regulate autophagy. Highly expressed in adult heart, pancreas, and prostate with moderate expression in adult brain, kidney, liver, adipose tissue and lung.

The protein localises to the lysosome membrane. Its subcellular location is the cytoplasm. It is found in the cytosol. It localises to the cell projection. The protein resides in the cilium. The protein localises to the cytoskeleton. Its subcellular location is the microtubule organizing center. It is found in the centrosome. It localises to the spindle. The protein resides in the nucleus. Its activity is regulated as follows. GTPase-activating activity is inhibited in the folliculin complex (LFC), which stabilizes the GDP-bound state of RagA/RRAGA (or RagB/RRAGB), because Arg-164 is located far from the RagC/RRAGC or RagD/RRAGD nucleotide pocket. Disassembly of the LFC complex upon amino acid restimulation liberates the GTPase-activating activity. Its function is as follows. Multi-functional protein, involved in both the cellular response to amino acid availability and in the regulation of glycolysis. GTPase-activating protein that plays a key role in the cellular response to amino acid availability through regulation of the non-canonical mTORC1 signaling cascade controlling the MiT/TFE factors TFEB and TFE3. Activates mTORC1 by acting as a GTPase-activating protein: specifically stimulates GTP hydrolysis by RagC/RRAGC or RagD/RRAGD, promoting the conversion to the GDP-bound state of RagC/RRAGC or RagD/RRAGD, and thereby activating the kinase activity of mTORC1. The GTPase-activating activity is inhibited during starvation and activated in presence of nutrients. Acts as a key component for non-canonical mTORC1-dependent control of the MiT/TFE factors TFEB and TFE3, while it is not involved in mTORC1-dependent phosphorylation of canonical RPS6KB1/S6K1 and EIF4EBP1/4E-BP1. In low-amino acid conditions, the lysosomal folliculin complex (LFC) is formed on the membrane of lysosomes, which inhibits the GTPase-activating activity of FLCN, inactivates mTORC1 and maximizes nuclear translocation of TFEB and TFE3. Upon amino acid restimulation, RagA/RRAGA (or RagB/RRAGB) nucleotide exchange promotes disassembly of the LFC complex and liberates the GTPase-activating activity of FLCN, leading to activation of mTORC1 and subsequent cytoplasmic retention of TFEB and TFE3. Indirectly acts as a positive regulator of Wnt signaling by promoting mTOR-dependent cytoplasmic retention of MiT/TFE factor TFE3. Required for the exit of hematopoietic stem cell from pluripotency by promoting mTOR-dependent cytoplasmic retention of TFE3, thereby increasing Wnt signaling. Involved in the control of embryonic stem cells differentiation; together with LAMTOR1 it is necessary to recruit and activate RagC/RRAGC and RagD/RRAGD at the lysosomes, and to induce exit of embryonic stem cells from pluripotency via non-canonical, mTOR-independent TFE3 inactivation. Acts as an inhibitor of browning of adipose tissue by regulating mTOR-dependent cytoplasmic retention of TFE3. In response to flow stress, regulates STK11/LKB1 accumulation and mTORC1 activation through primary cilia: may act by recruiting STK11/LKB1 to primary cilia for activation of AMPK resided at basal bodies, causing mTORC1 down-regulation. Together with FNIP1 and/or FNIP2, regulates autophagy: following phosphorylation by ULK1, interacts with GABARAP and promotes autophagy. Required for starvation-induced perinuclear clustering of lysosomes by promoting association of RILP with its effector RAB34. Regulates glycolysis by binding to lactate dehydrogenase LDHA, acting as an uncompetitive inhibitor. This chain is Folliculin, found in Mus musculus (Mouse).